The chain runs to 312 residues: Glyoxylate/hydroxypyruvate reductase A (312 aa).

Residue arginine 227 is part of the active site. The Proton donor role is filled by histidine 275.

This sequence belongs to the D-isomer specific 2-hydroxyacid dehydrogenase family. GhrA subfamily.

It localises to the cytoplasm. It catalyses the reaction glycolate + NADP(+) = glyoxylate + NADPH + H(+). The enzyme catalyses (R)-glycerate + NAD(+) = 3-hydroxypyruvate + NADH + H(+). The catalysed reaction is (R)-glycerate + NADP(+) = 3-hydroxypyruvate + NADPH + H(+). Functionally, catalyzes the NADPH-dependent reduction of glyoxylate and hydroxypyruvate into glycolate and glycerate, respectively. The chain is Glyoxylate/hydroxypyruvate reductase A from Shigella dysenteriae serotype 1 (strain Sd197).